Consider the following 734-residue polypeptide: MALRFPRFSQGLAQDPTTRRIWFGIATAHDFESHDDITEERLYQNIFASHFGQLAIIFLWTSGNLFHVAWQGNFESWVQDPLHVRPIAHAIWDPHFGQPAVEAFTRGGALGPVNIAYSGVYQWWYTIGLRTNEDLYTGALFLLFLSAISLIAGWLHLQPKWKPSVSWFKNAESRLNHHLSGLFGVSSLAWTGHLVHVAIPASRGEYVRWNNFLDVLPHPQGLGPLFTGQWNLYAQNPDSSSHLFGTAEGAGTAILTLLGGFHPQTQSLWLTDIAHHHLAIAFIFLVAGHMYRTNFGIGHSMKDLLDAHIPPGGRLGRGHKGLYDTINNSLHFQLGLALASLGVITSLVAQHMYSLPAYAFIAQDFTTQAALYTHHQYIAGFIMTGAFAHGAIFFIRDYNPEQNEDNVLARMLDHKEAIISHLSWASLFLGFHTLGLYVHNDVMLAFGTPEKQILIEPIFAQWIQSAHGKTSYGFDVLLSSTTGPAFNAGRSIWLPGWLNAVNENSNSLFLTIGPGDFLVHHAIALGLHTTTLILVKGALDARGSKLMPDKKDFGYSFPCDGPGRGGTCDISAWDAFYLAVFWMLNTIGWVTFYWHWKHITLWQGNVSQFNESSTYLMGWLRDYLWLNSSQLINGYNPFGMNSLSVWAWMFLFGHLVWATGFMFLISWRGYWQELIETLAWAHERTPLANLIRWRDKPVALSIVQARLVGLAHFSVGYIFTYAAFLIASTSGKFG.

8 helical membrane passes run 46–69, 135–158, 175–199, 273–291, 330–353, 369–395, 417–439, and 517–535; these read IFAS…FHVA, LYTG…LHLQ, LNHH…HVAI, IAHH…GHMY, LHFQ…QHMY, AALY…IFFI, AIIS…LYVH, and FLVH…LILV. Positions 559 and 568 each coordinate [4Fe-4S] cluster. A run of 2 helical transmembrane segments spans residues 575–596 and 643–665; these read AFYL…YWHW and LSVW…MFLI. Positions 654, 662, and 670 each coordinate chlorophyll a. Residue Trp671 coordinates phylloquinone. Residues 707–727 form a helical membrane-spanning segment; that stretch reads LVGLAHFSVGYIFTYAAFLIA.

It belongs to the PsaA/PsaB family. As to quaternary structure, the PsaA/B heterodimer binds the P700 chlorophyll special pair and subsequent electron acceptors. PSI consists of a core antenna complex that captures photons, and an electron transfer chain that converts photonic excitation into a charge separation. The eukaryotic PSI reaction center is composed of at least 11 subunits. It depends on P700 is a chlorophyll a/chlorophyll a' dimer, A0 is one or more chlorophyll a, A1 is one or both phylloquinones and FX is a shared 4Fe-4S iron-sulfur center. as a cofactor.

The protein resides in the plastid. Its subcellular location is the chloroplast thylakoid membrane. The catalysed reaction is reduced [plastocyanin] + hnu + oxidized [2Fe-2S]-[ferredoxin] = oxidized [plastocyanin] + reduced [2Fe-2S]-[ferredoxin]. In terms of biological role, psaA and PsaB bind P700, the primary electron donor of photosystem I (PSI), as well as the electron acceptors A0, A1 and FX. PSI is a plastocyanin-ferredoxin oxidoreductase, converting photonic excitation into a charge separation, which transfers an electron from the donor P700 chlorophyll pair to the spectroscopically characterized acceptors A0, A1, FX, FA and FB in turn. Oxidized P700 is reduced on the lumenal side of the thylakoid membrane by plastocyanin. This Solanum bulbocastanum (Wild potato) protein is Photosystem I P700 chlorophyll a apoprotein A2.